The following is a 211-amino-acid chain: Urease accessory protein UreE (211 aa).

A disordered region spans residues 170-211 (EHHGHSHDRGCDHSHSHSHDHDHDHGHVHGPGCGHAPHHRHD). Over residues 176–196 (HDRGCDHSHSHSHDHDHDHGH) the composition is skewed to basic and acidic residues.

It belongs to the UreE family.

Its subcellular location is the cytoplasm. Functionally, involved in urease metallocenter assembly. Binds nickel. Probably functions as a nickel donor during metallocenter assembly. The chain is Urease accessory protein UreE from Ralstonia nicotianae (strain ATCC BAA-1114 / GMI1000) (Ralstonia solanacearum).